A 227-amino-acid polypeptide reads, in one-letter code: Ribose-5-phosphate isomerase A (227 aa).

Substrate contacts are provided by residues 26-29 (TGST), 82-85 (DGAD), and 95-98 (KGGG). E104 serves as the catalytic Proton acceptor. Substrate is bound at residue K122.

This sequence belongs to the ribose 5-phosphate isomerase family. As to quaternary structure, homodimer.

The catalysed reaction is aldehydo-D-ribose 5-phosphate = D-ribulose 5-phosphate. The protein operates within carbohydrate degradation; pentose phosphate pathway; D-ribose 5-phosphate from D-ribulose 5-phosphate (non-oxidative stage): step 1/1. Catalyzes the reversible conversion of ribose-5-phosphate to ribulose 5-phosphate. The polypeptide is Ribose-5-phosphate isomerase A (Streptococcus equi subsp. zooepidemicus (strain MGCS10565)).